The sequence spans 155 residues: 3-hydroxyacyl-[acyl-carrier-protein] dehydratase FabZ (155 aa).

The active site involves His57.

This sequence belongs to the thioester dehydratase family. FabZ subfamily.

It is found in the cytoplasm. It carries out the reaction a (3R)-hydroxyacyl-[ACP] = a (2E)-enoyl-[ACP] + H2O. Involved in unsaturated fatty acids biosynthesis. Catalyzes the dehydration of short chain beta-hydroxyacyl-ACPs and long chain saturated and unsaturated beta-hydroxyacyl-ACPs. The polypeptide is 3-hydroxyacyl-[acyl-carrier-protein] dehydratase FabZ (Cereibacter sphaeroides (strain KD131 / KCTC 12085) (Rhodobacter sphaeroides)).